Consider the following 617-residue polypeptide: Chaperone protein HscA homolog (617 aa).

This sequence belongs to the heat shock protein 70 family.

Its function is as follows. Chaperone involved in the maturation of iron-sulfur cluster-containing proteins. Has a low intrinsic ATPase activity which is markedly stimulated by HscB. The polypeptide is Chaperone protein HscA homolog (Photobacterium profundum (strain SS9)).